The following is a 751-amino-acid chain: MTISPPEREGKVKVTVDNDPVPTSFEKWGQPGHFDRTLARGPKTTTWIWNLHANAHDFDSQTSDLEDVSRKIFSAHFGHLAVVFVWLSGMYFHGARFSNYEAWLADPTHIKPSAQVVWPIVGQGILNADVGGGFHGIQITSGFFYLWRASGFTNSYQLYCTAIGGLVMAALMLFAGWFHYHKRAPKLEWFQNVESMMNHHLAGLLGLGSLGWAGHQIHVSLPINKLLDAGVAPADIPLPHEFILDPSKMQELYPSFAKGILPFFTLNWGVYSDFLTFKGGLNPVTGGLWLSDTAHHHLAIAVLFIIAGHMYRTNWGIGHSMKQILEAHKGPFTGEGHKGLYEILTTSWHAQLAINLAMLGSLTIIVAHHMYAMPPYPYQAIDYATQLSLFTHHMWIGGFLIVGAGAHGAIFMVRDYKPSQNVDNLLDRVIRHRDAIISHLNWVCIFLGFHSFGLYVHNDTMRALGRPQDMFSDTAIQLQPIFAQWVQNIHTVAPGATAPNALAPASYAFGGDVVAVAGKVAMMPISLGTADFLVHHIHAFTIHVTVLILLKGVLFARSSRLIPDKGQLGFRFPCDGPGRGGTCQVSGWDHVFLGLFWMYNSLSIVIFHFSWKMQSDVWGSVLPDGTISHITGGNFAQSSITINGWLRDFLWAQAANVINSYGSALSAYGIMFLAGHFVFAFSLMFLFSGRGYWQELIESIVWAHNKLRVAPSIQPRALSIIQGRAVGVTHYLLGGIVTTWAFFLARTLSIQ.

The next 8 membrane-spanning stretches (helical) occupy residues Ile72 to Ala95, Leu158 to His181, Met197 to Leu221, Thr293 to Tyr311, Trp348 to Tyr371, Leu387 to Val413, Ala435 to His457, and Phe532 to Leu550. Cys574 and Cys583 together coordinate [4Fe-4S] cluster. The next 2 helical transmembrane spans lie at His590–Trp611 and Leu665–Phe687. Position 676 (His676) interacts with chlorophyll a'. Residues Met684 and Tyr692 each contribute to the chlorophyll a site. Trp693 lines the phylloquinone pocket. A helical membrane pass occupies residues Ala725–Ala745.

The protein belongs to the PsaA/PsaB family. As to quaternary structure, the PsaA/B heterodimer binds the P700 chlorophyll special pair and subsequent electron acceptors. PSI consists of a core antenna complex that captures photons, and an electron transfer chain that converts photonic excitation into a charge separation. The cyanobacterial PSI reaction center is composed of one copy each of PsaA,B,C,D,E,F,I,J,K,L,M and X, and forms trimeric complexes. PSI electron transfer chain: 5 chlorophyll a, 1 chlorophyll a', 2 phylloquinones and 3 4Fe-4S clusters. PSI core antenna: 90 chlorophyll a, 22 carotenoids, 3 phospholipids and 1 galactolipid. P700 is a chlorophyll a/chlorophyll a' dimer, A0 is one or more chlorophyll a, A1 is one or both phylloquinones and FX is a shared 4Fe-4S iron-sulfur center. serves as cofactor.

The protein resides in the cellular thylakoid membrane. It carries out the reaction reduced [plastocyanin] + hnu + oxidized [2Fe-2S]-[ferredoxin] = oxidized [plastocyanin] + reduced [2Fe-2S]-[ferredoxin]. In terms of biological role, psaA and PsaB bind P700, the primary electron donor of photosystem I (PSI), as well as the electron acceptors A0, A1 and FX. PSI is a plastocyanin/cytochrome c6-ferredoxin oxidoreductase, converting photonic excitation into a charge separation, which transfers an electron from the donor P700 chlorophyll pair to the spectroscopically characterized acceptors A0, A1, FX, FA and FB in turn. Oxidized P700 is reduced on the lumenal side of the thylakoid membrane by plastocyanin or cytochrome c6. This Gloeothece citriformis (strain PCC 7424) (Cyanothece sp. (strain PCC 7424)) protein is Photosystem I P700 chlorophyll a apoprotein A1.